We begin with the raw amino-acid sequence, 195 residues long: Probable GTP-binding protein EngB (195 aa).

The EngB-type G domain maps to 24–195; sequence DWPEIALAGR…EAWEAILRYL (172 aa). GTP is bound by residues 32-39, 59-63, 77-80, 144-147, and 176-178; these read GRSNVGKS, GKTQL, DVPG, TKAD, and FSS. 2 residues coordinate Mg(2+): S39 and T61.

This sequence belongs to the TRAFAC class TrmE-Era-EngA-EngB-Septin-like GTPase superfamily. EngB GTPase family. Mg(2+) serves as cofactor.

Necessary for normal cell division and for the maintenance of normal septation. This Lactococcus lactis subsp. lactis (strain IL1403) (Streptococcus lactis) protein is Probable GTP-binding protein EngB.